We begin with the raw amino-acid sequence, 354 residues long: Holliday junction branch migration complex subunit RuvB (354 aa).

The tract at residues 1 to 24 (MSIQTDDFAPVPPPKRVVSAAPTS) is disordered. Residues 5 to 195 (TDDFAPVPPP…FGIVARLEFY (191 aa)) form a large ATPase domain (RuvB-L) region. Residues leucine 34, arginine 35, glycine 76, lysine 79, threonine 80, threonine 81, 142-144 (EDY), arginine 185, tyrosine 195, and arginine 232 each bind ATP. Mg(2+) is bound at residue threonine 80. The tract at residues 196 to 266 (TPEELSRIVT…IAQRALAMLD (71 aa)) is small ATPAse domain (RuvB-S). The head domain (RuvB-H) stretch occupies residues 269 to 354 (PQGFDVMDRK…RQHTDLFGPA (86 aa)). Residues arginine 324 and arginine 329 each contribute to the DNA site.

Belongs to the RuvB family. In terms of assembly, homohexamer. Forms an RuvA(8)-RuvB(12)-Holliday junction (HJ) complex. HJ DNA is sandwiched between 2 RuvA tetramers; dsDNA enters through RuvA and exits via RuvB. An RuvB hexamer assembles on each DNA strand where it exits the tetramer. Each RuvB hexamer is contacted by two RuvA subunits (via domain III) on 2 adjacent RuvB subunits; this complex drives branch migration. In the full resolvosome a probable DNA-RuvA(4)-RuvB(12)-RuvC(2) complex forms which resolves the HJ.

The protein resides in the cytoplasm. It carries out the reaction ATP + H2O = ADP + phosphate + H(+). Its function is as follows. The RuvA-RuvB-RuvC complex processes Holliday junction (HJ) DNA during genetic recombination and DNA repair, while the RuvA-RuvB complex plays an important role in the rescue of blocked DNA replication forks via replication fork reversal (RFR). RuvA specifically binds to HJ cruciform DNA, conferring on it an open structure. The RuvB hexamer acts as an ATP-dependent pump, pulling dsDNA into and through the RuvAB complex. RuvB forms 2 homohexamers on either side of HJ DNA bound by 1 or 2 RuvA tetramers; 4 subunits per hexamer contact DNA at a time. Coordinated motions by a converter formed by DNA-disengaged RuvB subunits stimulates ATP hydrolysis and nucleotide exchange. Immobilization of the converter enables RuvB to convert the ATP-contained energy into a lever motion, pulling 2 nucleotides of DNA out of the RuvA tetramer per ATP hydrolyzed, thus driving DNA branch migration. The RuvB motors rotate together with the DNA substrate, which together with the progressing nucleotide cycle form the mechanistic basis for DNA recombination by continuous HJ branch migration. Branch migration allows RuvC to scan DNA until it finds its consensus sequence, where it cleaves and resolves cruciform DNA. The polypeptide is Holliday junction branch migration complex subunit RuvB (Paracidovorax citrulli (strain AAC00-1) (Acidovorax citrulli)).